The chain runs to 379 residues: Dihydroorotate dehydrogenase (quinone) (379 aa).

FMN is bound by residues 79–83 and A103; that span reads AGCDK. A substrate-binding site is contributed by K83. 128–131 provides a ligand contact to substrate; sequence NRLG. N160 and N193 together coordinate FMN. Residue N193 participates in substrate binding. S196 serves as the catalytic Nucleophile. N198 contributes to the substrate binding site. Residues K231 and T259 each coordinate FMN. 260 to 261 contributes to the substrate binding site; that stretch reads NT. Residues G289, G318, and 339–340 each bind FMN; that span reads YT.

The protein belongs to the dihydroorotate dehydrogenase family. Type 2 subfamily. As to quaternary structure, monomer. Requires FMN as cofactor.

Its subcellular location is the cell membrane. The enzyme catalyses (S)-dihydroorotate + a quinone = orotate + a quinol. It functions in the pathway pyrimidine metabolism; UMP biosynthesis via de novo pathway; orotate from (S)-dihydroorotate (quinone route): step 1/1. In terms of biological role, catalyzes the conversion of dihydroorotate to orotate with quinone as electron acceptor. The sequence is that of Dihydroorotate dehydrogenase (quinone) from Crocosphaera subtropica (strain ATCC 51142 / BH68) (Cyanothece sp. (strain ATCC 51142)).